The sequence spans 96 residues: YcgL domain-containing protein Csal_1462 (96 aa).

In terms of domain architecture, YcgL spans 4–88 (RLCEIFKSPR…ARESYLLDLY (85 aa)).

The sequence is that of YcgL domain-containing protein Csal_1462 from Chromohalobacter salexigens (strain ATCC BAA-138 / DSM 3043 / CIP 106854 / NCIMB 13768 / 1H11).